The sequence spans 740 residues: F-BAR and double SH3 domains protein 2 (740 aa).

The F-BAR domain maps to 8–282; it reads VKVTQELKNI…NSSKVVRDYN (275 aa). The tract at residues 303-323 is disordered; sequence PCDSDTSRQLESETGTTEEHS. The segment covering 307–323 has biased composition (basic and acidic residues); the sequence is DTSRQLESETGTTEEHS. A coiled-coil region spans residues 356 to 397; sequence GAAVSEQSRAELEQKIDEARENIRKAEIIKLKAEARLDLLKQ. 2 SH3 domains span residues 469 to 530 and 567 to 629; these read NYPL…FPTS and ASVC…ELSA. The segment at 567 to 629 is required and sufficient for location at clathrin-coated pits; the sequence is ASVCFVKALY…PSVLVEELSA (63 aa). Residues 633-740 are disordered; the sequence is GDTPWMREIQ…KIEDVEITLV (108 aa). The segment covering 646–657 has biased composition (pro residues); that stretch reads SPKPHASLPPLP. Phosphoserine is present on residues Ser675 and Ser681.

As to quaternary structure, homodimer. Interacts (via SH3 domain 2) with ITSN1 (via SH3 domain 4). Recruited to clathrin-coated pits during a mid-to-late stage of assembly via interaction with ITSN1. Interacts (via SH3 domain 1) with WASL. Interacts with WAS. Interacts with CASK and MAGI1. CASK inhibits interaction with MAGI1. Post-translationally, phosphorylated. Phosphorylation on a Ser residue is important for recruitment to the cell membrane and for its role in promoting endocytosis. Liver, brain, heart, placenta, skeletal muscle, pancreas, lung and kidney.

The protein localises to the cytoplasm. Its subcellular location is the cell junction. It is found in the membrane. It localises to the clathrin-coated pit. The protein resides in the cell membrane. The protein localises to the cell projection. Its subcellular location is the stereocilium. In terms of biological role, adapter protein that plays a role in endocytosis via clathrin-coated pits. Contributes to the internalization of cell surface receptors, such as integrin ITGB1 and transferrin receptor. Promotes endocytosis of EGFR in cancer cells, and thereby contributes to the down-regulation of EGFR signaling. Recruited to clathrin-coated pits during a mid-to-late stage of assembly, where it is required for normal progress from U-shaped intermediate stage pits to terminal, omega-shaped pits. Binds to membranes enriched in phosphatidylinositol 3,4-bisphosphate or phosphatidylinositol 3,4,5-trisphosphate. When bound to membranes, promotes actin polymerization via its interaction with WAS and/or WASL which leads to the activation of the Arp2/3 complex. Does not promote actin polymerisation in the absence of membranes. In Homo sapiens (Human), this protein is F-BAR and double SH3 domains protein 2 (FCHSD2).